Reading from the N-terminus, the 40-residue chain is Natriuretic peptide TNPd (40 aa).

A disulfide bridge connects residues cysteine 9 and cysteine 25.

Belongs to the natriuretic peptide family. Expressed by the venom gland.

The protein localises to the secreted. Functionally, snake venom natriuretic peptide that exhibits vasoactive and hypotensive activity. Stimulates cGMP production through the natriuretic peptide receptor 1 (NPR1) with very high potencies for the rat NPR1 (EC(50)=18 nM), and very weak potencies over human NPR1 (30% activation at 10 uM). This Oxyuranus microlepidotus (Inland taipan) protein is Natriuretic peptide TNPd.